Here is a 406-residue protein sequence, read N- to C-terminus: Methylthioribose-1-phosphate isomerase (406 aa).

The active-site Proton donor is the aspartate 277.

This sequence belongs to the eIF-2B alpha/beta/delta subunits family. MtnA subfamily.

Its subcellular location is the cytoplasm. It localises to the nucleus. It catalyses the reaction 5-(methylsulfanyl)-alpha-D-ribose 1-phosphate = 5-(methylsulfanyl)-D-ribulose 1-phosphate. It participates in amino-acid biosynthesis; L-methionine biosynthesis via salvage pathway; L-methionine from S-methyl-5-thio-alpha-D-ribose 1-phosphate: step 1/6. In terms of biological role, catalyzes the interconversion of methylthioribose-1-phosphate (MTR-1-P) into methylthioribulose-1-phosphate (MTRu-1-P). The sequence is that of Methylthioribose-1-phosphate isomerase from Debaryomyces hansenii (strain ATCC 36239 / CBS 767 / BCRC 21394 / JCM 1990 / NBRC 0083 / IGC 2968) (Yeast).